Reading from the N-terminus, the 247-residue chain is Eukaryotic translation initiation factor 6 (247 aa).

Phosphoserine; by CK1 is present on residues serine 174 and serine 175.

Belongs to the eIF-6 family. Monomer. Associates with the 60S ribosomal subunit. Phosphorylation at Ser-174 and Ser-175 promotes nuclear export.

The protein localises to the cytoplasm. The protein resides in the nucleus. It localises to the nucleolus. Functionally, binds to the 60S ribosomal subunit and prevents its association with the 40S ribosomal subunit to form the 80S initiation complex in the cytoplasm. Is also involved in ribosome biogenesis. Associates with pre-60S subunits in the nucleus and is involved in its nuclear export. This Talaromyces stipitatus (strain ATCC 10500 / CBS 375.48 / QM 6759 / NRRL 1006) (Penicillium stipitatum) protein is Eukaryotic translation initiation factor 6 (tif6).